Reading from the N-terminus, the 375-residue chain is Membrane progesterone receptor epsilon (375 aa).

A disordered region spans residues 1 to 39 (MPRRLQQRGAGVKGPPASTSRRSHPASASAPRSPPAATT). Topologically, residues 1–84 (MPRRLQQRGA…VLKPTNETLN (84 aa)) are cytoplasmic. Residues 15–39 (PPASTSRRSHPASASAPRSPPAATT) show a composition bias toward low complexity. A helical membrane pass occupies residues 85 to 105 (FWTHFIPLLLFLSKFCRLFFL). The Extracellular segment spans residues 106–114 (GGSDVPFHH). The helical transmembrane segment at 115-135 (PWLLPLWCYASGVLLTFAMSC) threads the bilayer. Residues 136 to 160 (TAHVFSCLSLRLRAAFFYLDYASIS) lie on the Cytoplasmic side of the membrane. Residues 161–181 (YYGFGSTVAYYYYLLPSLSLL) form a helical membrane-spanning segment. Residues 182-203 (DARVMTPYVQQRLGWHVDCTRL) are Extracellular-facing. The helical transmembrane segment at 204-224 (IAVYRALVLPVAFVLAVACTV) threads the bilayer. Residues 225–241 (ACCKSRTDWCSYPFALR) are Cytoplasmic-facing. The chain crosses the membrane as a helical span at residues 242–262 (TFVFVMPLSMACPIMLESWLF). Over 263 to 299 (DLRGENPTLFVHFYRRYFWLVVAAFFNVSKIPERIQP) the chain is Extracellular. Residues 300-320 (GLFDIIGHSHQLFHIFTFLSI) traverse the membrane as a helical segment. The Cytoplasmic portion of the chain corresponds to 321 to 341 (YDQVYYVEEGLRQFLQAPPAA). Residues 342–362 (PTFSGTVGYMLLLVVCLGLVI) traverse the membrane as a helical segment. The Extracellular segment spans residues 363–375 (RKFLNSTEFCSKK).

Belongs to the ADIPOR family. As to quaternary structure, homodimer.

Its subcellular location is the cell membrane. In terms of biological role, plasma membrane progesterone (P4) receptor coupled to G proteins. Seems to act through a G(s) mediated pathway. May be involved in regulating rapid P4 signaling in the nervous system. Also binds dehydroepiandrosterone (DHEA), pregnanolone, pregnenolone and allopregnanolone. This is Membrane progesterone receptor epsilon from Mus musculus (Mouse).